We begin with the raw amino-acid sequence, 160 residues long: Protein TCP17 (160 aa).

It localises to the cytoplasm. This Trypanosoma cruzi protein is Protein TCP17.